We begin with the raw amino-acid sequence, 424 residues long: Tyrosine--tRNA ligase (424 aa).

Tyrosine 33 lines the L-tyrosine pocket. The 'HIGH' region signature appears at 38–47 (PSADSLHIGH). L-tyrosine is bound by residues tyrosine 170 and glutamine 174. The short motif at 230-234 (KFGKT) is the 'KMSKS' region element. Lysine 233 is an ATP binding site. In terms of domain architecture, S4 RNA-binding spans 357 to 424 (MSLIDALVRC…RRHYHLIRLV (68 aa)).

It belongs to the class-I aminoacyl-tRNA synthetase family. TyrS type 1 subfamily. In terms of assembly, homodimer.

The protein localises to the cytoplasm. It catalyses the reaction tRNA(Tyr) + L-tyrosine + ATP = L-tyrosyl-tRNA(Tyr) + AMP + diphosphate + H(+). In terms of biological role, catalyzes the attachment of tyrosine to tRNA(Tyr) in a two-step reaction: tyrosine is first activated by ATP to form Tyr-AMP and then transferred to the acceptor end of tRNA(Tyr). The sequence is that of Tyrosine--tRNA ligase from Roseiflexus castenholzii (strain DSM 13941 / HLO8).